The following is a 292-amino-acid chain: Ferric aerobactin-binding protein VatD (292 aa).

The first 12 residues, 1–12, serve as a signal peptide directing secretion; that stretch reads MLSAALAFNSYA. One can recognise a Fe/B12 periplasmic-binding domain in the interval 30-292; the sequence is KVVALDWVLT…HITGRLTQPQ (263 aa). Desferrioxamine B contacts are provided by Trp-61, Arg-77, Tyr-118, Arg-185, Trp-213, Phe-215, Trp-269, and Phe-271.

This sequence belongs to the bacterial solute-binding protein 8 family. In terms of assembly, the complex is composed of two ATP-binding proteins (VatC), two transmembrane proteins (VatB) and a solute-binding protein (VatD).

It localises to the periplasm. Part of the ABC transporter complex VatCDB involved in the import of iron(3+)-complexed aerobactin, a citrate-hydroxamate siderophore produced by other bacteria. Binds the iron(3+)-aerobactin complex and transfers it to the membrane-bound permease. Functions in the import of iron(3+)-complexed vulnibactin, a catecholate siderophore synthesized by V.vulnificus, in the absence of FatB. The sequence is that of Ferric aerobactin-binding protein VatD from Vibrio vulnificus.